Reading from the N-terminus, the 980-residue chain is Phosphoenolpyruvate carboxylase (980 aa).

Active-site residues include His-182 and Lys-625.

This sequence belongs to the PEPCase type 1 family. Mg(2+) serves as cofactor.

The catalysed reaction is oxaloacetate + phosphate = phosphoenolpyruvate + hydrogencarbonate. Its function is as follows. Forms oxaloacetate, a four-carbon dicarboxylic acid source for the tricarboxylic acid cycle. The polypeptide is Phosphoenolpyruvate carboxylase (Bordetella pertussis (strain Tohama I / ATCC BAA-589 / NCTC 13251)).